A 503-amino-acid polypeptide reads, in one-letter code: MKISIKDIFQKPELFYQKKILLNGWVRNCRYQKKLIFIDLNDGTFLENLQIVCKEIKNIETADINEFQENQKFNNNNKSSNNINLEKLKEILQIGASLQVEGILKATNNLKTPFEISAQNISLLGTSDFSYPLQPKKHSKVFLRQISHLRVRTKLFGAVFRIRNTAFFALHSFFQKKGFFHINTPIITPNDGEGVGELFQITTLNLEVLPQTKNIPNAFKPVNENTSKKGIDYKKDFFGKKVFLTVTGQLEAEAMALGLNKVYTFGPTFRSEKSNTTRHAAEFWMLEPEMAFCDLSQNLKVAQEMLQFVISKCLEQNYQDIEFLDKTEKNGLIEELQNIAEEKEFLTVKYEQALEILQKSNTKFENPLFYGVDLATEHEKYLTEKHFKKPVFIVDWPKEIKAFYMKNNPDQKTVAAMDLLFPRVGELIGGSQREENLSVLIEKMNQMKISQKDLEWYLDLRRFGGCIHSGFGLGFERLLIFLTGLDNIRDVIAFPRTYHNLVF.

The protein belongs to the class-II aminoacyl-tRNA synthetase family. As to quaternary structure, homodimer.

The protein resides in the cytoplasm. The enzyme catalyses tRNA(Asn) + L-asparagine + ATP = L-asparaginyl-tRNA(Asn) + AMP + diphosphate + H(+). This chain is Asparagine--tRNA ligase, found in Aster yellows witches'-broom phytoplasma (strain AYWB).